We begin with the raw amino-acid sequence, 946 residues long: Increased sodium tolerance protein 2 (946 aa).

Topologically, residues 1 to 121 (MSQTITSLDP…SNLTNNPKQS (121 aa)) are cytoplasmic. A helical membrane pass occupies residues 122 to 142 (LYFAFLQNYIKWLIPFSFFGL). Over 143-153 (SIRFLSNFTYE) the chain is Extracellular. The chain crosses the membrane as a helical span at residues 154–174 (FNSTYSLFAILWTLSFTAFWL). At 175-217 (YKYEPFWSDRLSKYSSFSTIEFLQDKQKAQKKASSVIMLKKCC) the chain is on the cytoplasmic side. Residues 218–238 (FIPVALLFGAILLSFQLYCFA) form a helical membrane-spanning segment. The Extracellular portion of the chain corresponds to 239–253 (LEIFIKQIYNGPMIS). Residues 254–274 (ILSFLPTILICTFTPVLTVIY) form a helical membrane-spanning segment. The Cytoplasmic portion of the chain corresponds to 275-302 (NKYFVEPMTKWENHSSVVNAKKSKEAKN). Residues 303-323 (FVIIFLSSYVPLLITLFLYLP) form a helical membrane-spanning segment. Topologically, residues 324–447 (MGHLLTAEIR…DANFKKLLLQ (124 aa)) are extracellular. A helical membrane pass occupies residues 448-468 (FGYLVMFSTIWPLAPFICLIV). Topologically, residues 469–505 (NLIVYQVDLRKAVLYSKPEYFPFPIYDKPSSVSNTQK) are cytoplasmic. A helical transmembrane segment spans residues 506–526 (LTVGLWNSVLVMFSILGCVIT). Over 527 to 563 (ATLTYMYQSCNIPGVGAHTSIHTNKAWYLANPINHSW) the chain is Extracellular. Residues 564–584 (INIVLYAVFIEHVSVAIFFLF) form a helical membrane-spanning segment. Topologically, residues 585–946 (SSILKSSHDD…GLLHKLKKKL (362 aa)) are cytoplasmic. Disordered stretches follow at residues 617–638 (EKIP…RKGS) and 665–718 (THAN…TEKR). Over residues 628–638 (NEKELVQRKGS) the composition is skewed to basic and acidic residues. S638 is subject to Phosphoserine. Over residues 671–689 (PSSLSSASSPSLSSSSSSS) the composition is skewed to low complexity. T701 is modified (phosphothreonine). Residues S704 and S720 each carry the phosphoserine modification. Residue T726 is modified to Phosphothreonine. S729 is subject to Phosphoserine. At Y730 the chain carries Phosphotyrosine. S757 is subject to Phosphoserine. The segment at 759–784 (RDAKSSAESSNATNNNTLGTESKLLP) is disordered. Residues 764 to 775 (SAESSNATNNNT) show a composition bias toward low complexity. S793, S844, and S847 each carry phosphoserine. The interval 846 to 946 (VSVATEQTKK…GLLHKLKKKL (101 aa)) is disordered. At T850 the chain carries Phosphothreonine. A compositionally biased stretch (polar residues) spans 859-868 (STKNGPSRSI). A compositionally biased stretch (low complexity) spans 884-893 (TTTTTTTDAT). Over residues 895-905 (PHHHHHHHRHR) the composition is skewed to basic residues. Positions 916-927 (SKTTESSSSSSA) are enriched in low complexity. The segment covering 931-946 (KPKHKKGLLHKLKKKL) has biased composition (basic residues).

Interacts with BTN2.

It localises to the cell membrane. Functionally, may be involved in ion homeostasis together with BTN1 or BTN2. The sequence is that of Increased sodium tolerance protein 2 (IST2) from Saccharomyces cerevisiae (strain ATCC 204508 / S288c) (Baker's yeast).